Reading from the N-terminus, the 360-residue chain is Phospho-N-acetylmuramoyl-pentapeptide-transferase (360 aa).

10 helical membrane-spanning segments follow: residues A26–A46, T73–L93, Y97–Y117, W132–A152, V168–S188, G199–S219, A236–F256, V263–L283, I288–V308, and V338–K358.

It belongs to the glycosyltransferase 4 family. MraY subfamily. Requires Mg(2+) as cofactor.

The protein resides in the cell inner membrane. The catalysed reaction is UDP-N-acetyl-alpha-D-muramoyl-L-alanyl-gamma-D-glutamyl-meso-2,6-diaminopimeloyl-D-alanyl-D-alanine + di-trans,octa-cis-undecaprenyl phosphate = di-trans,octa-cis-undecaprenyl diphospho-N-acetyl-alpha-D-muramoyl-L-alanyl-D-glutamyl-meso-2,6-diaminopimeloyl-D-alanyl-D-alanine + UMP. The protein operates within cell wall biogenesis; peptidoglycan biosynthesis. In terms of biological role, catalyzes the initial step of the lipid cycle reactions in the biosynthesis of the cell wall peptidoglycan: transfers peptidoglycan precursor phospho-MurNAc-pentapeptide from UDP-MurNAc-pentapeptide onto the lipid carrier undecaprenyl phosphate, yielding undecaprenyl-pyrophosphoryl-MurNAc-pentapeptide, known as lipid I. This Shewanella halifaxensis (strain HAW-EB4) protein is Phospho-N-acetylmuramoyl-pentapeptide-transferase.